Here is a 318-residue protein sequence, read N- to C-terminus: Polyprenal reductase (318 aa).

Residues 1–11 (MAPWAEAEHSA) lie on the Cytoplasmic side of the membrane. The chain crosses the membrane as a helical span at residues 12–34 (LNPLRAVWLTLTAAFLLTLLLQL). Residues 35-80 (LPPGLLPGCAIFQDLIRYGKTKCGEPSRPAACRAFDVPKRYFSHFY) lie on the Lumenal side of the membrane. Residues 81 to 101 (IISVLWNGFLLWCLTQSLFLG) form a helical membrane-spanning segment. Over 102–117 (APFPSWLHGLLRILGA) the chain is Cytoplasmic. The chain crosses the membrane as a helical span at residues 118 to 138 (AQFQGGELALSAFLVLVFLWL). The Lumenal segment spans residues 139-157 (HSLRRLFECLYVSVFSNVM). A helical transmembrane segment spans residues 158–178 (IHVVQYCFGLVYYVLVGLTVL). Residues 179–194 (SQVPMDGRNAYITGKN) are Cytoplasmic-facing. A helical transmembrane segment spans residues 195-215 (LLMQARWFHILGMMMFIWSSA). Over 216-260 (HQYKCHVILGNLRKNKAGVVIHCNHRIPFGDWFEYVSSPNYLAEL) the chain is Lumenal. The chain crosses the membrane as a helical span at residues 261-281 (MIYVSMAVTFGFHNLTWWLVV). The Cytoplasmic segment spans residues 282 to 318 (TNVFFNQALSAFLSHQFYKSKFVSYPKHRKAFLPFLF).

Belongs to the steroid 5-alpha reductase family. Polyprenal reductase subfamily. Expressed in preadipocytes (at protein level). Overexpressed in hormone-refractory prostate cancers (HRPC). Almost no or little expression in normal adult organs.

It is found in the endoplasmic reticulum membrane. It catalyses the reaction a di-trans,poly-cis-dolichal + NADP(+) = a di-trans,poly-cis-polyprenal + NADPH + H(+). The catalysed reaction is a 3-oxo-5alpha-steroid + NADP(+) = a 3-oxo-Delta(4)-steroid + NADPH + H(+). It carries out the reaction androst-4-ene-3,17-dione + NADPH + H(+) = 5alpha-androstan-3,17-dione + NADP(+). The enzyme catalyses 17beta-hydroxy-5alpha-androstan-3-one + NADP(+) = testosterone + NADPH + H(+). The protein operates within protein modification; protein glycosylation. In terms of biological role, plays a key role in early steps of protein N-linked glycosylation by being involved in the conversion of polyprenol into dolichol. Acts as a polyprenal reductase that mediates the reduction of polyprenal into dolichal in a NADP-dependent mechanism. Dolichols are required for the synthesis of dolichol-linked monosaccharides and the oligosaccharide precursor used for N-glycosylation. Also able to convert testosterone (T) into 5-alpha-dihydrotestosterone (DHT). This chain is Polyprenal reductase, found in Homo sapiens (Human).